Consider the following 286-residue polypeptide: MHRLTLPAPAKLNLWLHIIGRRPDGYHELETVFQFLDHGDELTFALREDGAIRLHTEIEAVPHDSNLIVRAARRLQEQSGTGLGADIWLTKVLPMGGGIGGGSSDAATTLLALAHLWQLDWDEDRLAALGLTLGADVPVFVRGHAAFAQGVGEQLTPVDPAEPWYVVLVPQVSVSTVEIFSHPQLTRDSLPLKMRPVPEGNSRNDCQPVVEQSYPEVRNALNSLGKFTEARLTGTGSCVFGAFPSKAEADKVLALLSATQTGFVAKGSNVSMLHRKLQSLVKKSSA.

K11 is an active-site residue. Residue 94–104 (PMGGGIGGGSS) coordinates ATP. The active site involves D136.

The protein belongs to the GHMP kinase family. IspE subfamily.

The enzyme catalyses 4-CDP-2-C-methyl-D-erythritol + ATP = 4-CDP-2-C-methyl-D-erythritol 2-phosphate + ADP + H(+). Its pathway is isoprenoid biosynthesis; isopentenyl diphosphate biosynthesis via DXP pathway; isopentenyl diphosphate from 1-deoxy-D-xylulose 5-phosphate: step 3/6. Its function is as follows. Catalyzes the phosphorylation of the position 2 hydroxy group of 4-diphosphocytidyl-2C-methyl-D-erythritol. This chain is 4-diphosphocytidyl-2-C-methyl-D-erythritol kinase, found in Pseudomonas putida (strain W619).